The sequence spans 149 residues: L-alanine exporter AlaE (149 aa).

The next 4 helical transmembrane spans lie at 16–36 (FAMV…LSGM), 46–66 (LVAI…RDLI), 83–105 (ADVL…TVGA), and 115–135 (SSNI…LDYC).

It belongs to the AlaE exporter family.

It is found in the cell inner membrane. In terms of biological role, exports L-alanine. In Salmonella typhimurium (strain LT2 / SGSC1412 / ATCC 700720), this protein is L-alanine exporter AlaE.